A 158-amino-acid chain; its full sequence is Transcription elongation factor GreA (158 aa).

Positions 48 to 74 form a coiled coil; it reads EYDAAKNRQGFIEGRIKELNDKIARAE.

It belongs to the GreA/GreB family.

Its function is as follows. Necessary for efficient RNA polymerase transcription elongation past template-encoded arresting sites. The arresting sites in DNA have the property of trapping a certain fraction of elongating RNA polymerases that pass through, resulting in locked ternary complexes. Cleavage of the nascent transcript by cleavage factors such as GreA or GreB allows the resumption of elongation from the new 3'terminus. GreA releases sequences of 2 to 3 nucleotides. The chain is Transcription elongation factor GreA from Syntrophotalea carbinolica (strain DSM 2380 / NBRC 103641 / GraBd1) (Pelobacter carbinolicus).